Here is a 246-residue protein sequence, read N- to C-terminus: tRNA (guanine-N(1)-)-methyltransferase (246 aa).

Residues Gly-114 and 134-139 (IGDYIL) contribute to the S-adenosyl-L-methionine site. The span at 219-231 (LRRPDLWERHEGA) shows a compositional bias: basic and acidic residues. The disordered stretch occupies residues 219 to 246 (LRRPDLWERHEGARAQSPSGARRQKKER).

Belongs to the RNA methyltransferase TrmD family. In terms of assembly, homodimer.

It is found in the cytoplasm. The enzyme catalyses guanosine(37) in tRNA + S-adenosyl-L-methionine = N(1)-methylguanosine(37) in tRNA + S-adenosyl-L-homocysteine + H(+). Its function is as follows. Specifically methylates guanosine-37 in various tRNAs. The protein is tRNA (guanine-N(1)-)-methyltransferase of Rhizorhabdus wittichii (strain DSM 6014 / CCUG 31198 / JCM 15750 / NBRC 105917 / EY 4224 / RW1) (Sphingomonas wittichii).